The primary structure comprises 185 residues: Large ribosomal subunit protein uL5 (185 aa).

The protein belongs to the universal ribosomal protein uL5 family. Part of the 50S ribosomal subunit; part of the 5S rRNA/L5/L18/L25 subcomplex. Contacts the 5S rRNA and the P site tRNA. Forms a bridge to the 30S subunit in the 70S ribosome.

This is one of the proteins that bind and probably mediate the attachment of the 5S RNA into the large ribosomal subunit, where it forms part of the central protuberance. In the 70S ribosome it contacts protein S13 of the 30S subunit (bridge B1b), connecting the 2 subunits; this bridge is implicated in subunit movement. Contacts the P site tRNA; the 5S rRNA and some of its associated proteins might help stabilize positioning of ribosome-bound tRNAs. The chain is Large ribosomal subunit protein uL5 from Magnetococcus marinus (strain ATCC BAA-1437 / JCM 17883 / MC-1).